Consider the following 358-residue polypeptide: Presenilin hop-1 (358 aa).

At 1-12 (MPRTKRVYSGKT) the chain is on the cytoplasmic side. The helical transmembrane segment at 13–33 (ITGVLYPVAICMLFVAINVKL) threads the bilayer. Topologically, residues 34–57 (SQPEQQEQSKVVYGLFHSYDTADS) are lumenal. A helical transmembrane segment spans residues 58-78 (GTITLYLIGFLILTTSLGVFC). The Cytoplasmic segment spans residues 79–86 (YQMKFYKA). The chain crosses the membrane as a helical span at residues 87 to 107 (IKVYVLANSIGILLVYSVFHF). Over 108-115 (QRIAEAQS) the chain is Lumenal. A helical membrane pass occupies residues 116 to 136 (IPVSVPTFFFLILQFGGLGIT). Residues 137–148 (CLHWKSHRRLHQ) are Cytoplasmic-facing. A helical transmembrane segment spans residues 149 to 169 (FYLIMLAGLTAIFILNILPDW). Residue T170 is a topological domain, lumenal. A helical transmembrane segment spans residues 171 to 191 (VWMALTAISFWDIVAVLTPCG). D182 is an active-site residue. Over 192–273 (PLKMLVETAN…EVREVEGTIR (82 aa)) the chain is Cytoplasmic. The span at 221–240 (EVDSPDTTRSNSTPLTEFNN) shows a compositional bias: polar residues. The tract at residues 221-242 (EVDSPDTTRSNSTPLTEFNNSS) is disordered. A helical membrane pass occupies residues 274-294 (LGMGDFVFYSLMLGNTVQTCP). Residue D278 is part of the active site. Topologically, residues 295–297 (LPT) are lumenal. The chain crosses the membrane as a helical span at residues 298 to 318 (VVACFVSNLVGLTITLPIVTL). Over 319-321 (SQT) the chain is Cytoplasmic. An intramembrane region (helical) is located at residues 322-342 (ALPALPFPLAIAAIFYFSSHI). The PAL motif lies at 324–326 (PAL). Topologically, residues 343 to 358 (ALTPFTDLCTSQLILI) are cytoplasmic.

The protein belongs to the peptidase A22A family. As to quaternary structure, homodimer. Component of the gamma-secretase complex, a complex probably composed of the presenilin homodimer (sel-12, hop-1 or spe-4), nicastrin (aph-2), aph-1 and pen-2. Weakly expressed.

It is found in the endoplasmic reticulum membrane. The protein localises to the golgi apparatus membrane. Probable catalytic subunit of the gamma-secretase complex, an endoprotease complex that catalyzes the intramembrane cleavage of integral membrane proteins such as Notch receptors (lin-12 or glp-1). Probably works redundantly of lin-12, which provides more presenilin function. The polypeptide is Presenilin hop-1 (hop-1) (Caenorhabditis elegans).